The sequence spans 288 residues: 4-diphosphocytidyl-2-C-methyl-D-erythritol kinase (288 aa).

Lys-10 is an active-site residue. ATP is bound at residue 94-104; sequence PVAAGLGGGSS. The active site involves Asp-136.

The protein belongs to the GHMP kinase family. IspE subfamily.

It carries out the reaction 4-CDP-2-C-methyl-D-erythritol + ATP = 4-CDP-2-C-methyl-D-erythritol 2-phosphate + ADP + H(+). It functions in the pathway isoprenoid biosynthesis; isopentenyl diphosphate biosynthesis via DXP pathway; isopentenyl diphosphate from 1-deoxy-D-xylulose 5-phosphate: step 3/6. Its function is as follows. Catalyzes the phosphorylation of the position 2 hydroxy group of 4-diphosphocytidyl-2C-methyl-D-erythritol. The chain is 4-diphosphocytidyl-2-C-methyl-D-erythritol kinase from Lactiplantibacillus plantarum (strain ATCC BAA-793 / NCIMB 8826 / WCFS1) (Lactobacillus plantarum).